We begin with the raw amino-acid sequence, 548 residues long: Glucose-6-phosphate isomerase (548 aa).

The active-site Proton donor is the glutamate 355. Active-site residues include histidine 386 and lysine 511.

The protein belongs to the GPI family.

It is found in the cytoplasm. The enzyme catalyses alpha-D-glucose 6-phosphate = beta-D-fructose 6-phosphate. It functions in the pathway carbohydrate biosynthesis; gluconeogenesis. The protein operates within carbohydrate degradation; glycolysis; D-glyceraldehyde 3-phosphate and glycerone phosphate from D-glucose: step 2/4. Functionally, catalyzes the reversible isomerization of glucose-6-phosphate to fructose-6-phosphate. The chain is Glucose-6-phosphate isomerase from Wigglesworthia glossinidia brevipalpis.